Consider the following 230-residue polypeptide: Phosphoglycerate mutase-like protein 4 (230 aa).

Histidine 21 (tele-phosphohistidine intermediate) is an active-site residue. Glutamate 96 acts as the Proton donor/acceptor in catalysis.

The protein belongs to the phosphoglycerate mutase family.

Functionally, may play a role in carbohydrates metabolism. The sequence is that of Phosphoglycerate mutase-like protein 4 from Arabidopsis thaliana (Mouse-ear cress).